The chain runs to 137 residues: Probable 4-amino-4-deoxy-L-arabinose-phosphoundecaprenol flippase subunit ArnF (137 aa).

Residues 1 to 5 (MSRAR) are Cytoplasmic-facing. The chain crosses the membrane as a helical span at residues 6–26 (GFAFALGSVALVSGAQLGMRW). The Periplasmic portion of the chain corresponds to 27–49 (SMTRLPAPDQWLPALSAGSVDLA). The helical transmembrane segment at 50–70 (ALAVVAAAIAAYALSMLCWLL) threads the bilayer. Residues 71 to 80 (ALRDLPLGRA) lie on the Cytoplasmic side of the membrane. A helical transmembrane segment spans residues 81 to 101 (YSLLSISYALVYLLAASLPLF). Asn102 is a topological domain (periplasmic). A helical membrane pass occupies residues 103–123 (EPFTLSKTLGVALVILGVITI). Residues 124 to 137 (NSRSAPATSPRNTP) lie on the Cytoplasmic side of the membrane.

This sequence belongs to the ArnF family. In terms of assembly, heterodimer of ArnE and ArnF.

It localises to the cell inner membrane. Its pathway is bacterial outer membrane biogenesis; lipopolysaccharide biosynthesis. Its function is as follows. Translocates 4-amino-4-deoxy-L-arabinose-phosphoundecaprenol (alpha-L-Ara4N-phosphoundecaprenol) from the cytoplasmic to the periplasmic side of the inner membrane. In Pseudomonas fluorescens (strain ATCC BAA-477 / NRRL B-23932 / Pf-5), this protein is Probable 4-amino-4-deoxy-L-arabinose-phosphoundecaprenol flippase subunit ArnF.